Here is a 219-residue protein sequence, read N- to C-terminus: MAFLLHQARFFTTVNHLRDLPPTVQPEIAFAGRSNAGKSTAINVLCNQKRLAFASKTPGRTQHINYFSVGPAAEPVAHLVDLPGYGYAEVPGAAKAHWEQLLSSYLQTRPQLCGMILMMDARRPLTELDRRMIEWFAPTGKPIHSLLTKCDKLTRQESINALRATQKSLDAYRDAGYAGKLTVQLFSALKRTGLDDAHALIESWLRPAAADEDHAAVAE.

The region spanning V24–P207 is the EngB-type G domain. Residues G32–S39, G59–H63, D81–G84, T148–D151, and L185–A188 contribute to the GTP site. Mg(2+) is bound by residues S39 and T61.

It belongs to the TRAFAC class TrmE-Era-EngA-EngB-Septin-like GTPase superfamily. EngB GTPase family. It depends on Mg(2+) as a cofactor.

Its function is as follows. Necessary for normal cell division and for the maintenance of normal septation. This is Probable GTP-binding protein EngB from Burkholderia thailandensis (strain ATCC 700388 / DSM 13276 / CCUG 48851 / CIP 106301 / E264).